An 86-amino-acid chain; its full sequence is Large ribosomal subunit protein bL27 (86 aa).

Positions 1-10 (MAQKKGGGST) are enriched in gly residues. The interval 1–21 (MAQKKGGGSTRNGRDSESKRL) is disordered.

It belongs to the bacterial ribosomal protein bL27 family.

This Bordetella petrii (strain ATCC BAA-461 / DSM 12804 / CCUG 43448) protein is Large ribosomal subunit protein bL27.